Reading from the N-terminus, the 296-residue chain is 4-diphosphocytidyl-2-C-methyl-D-erythritol kinase (296 aa).

The active site involves K19. P102 to S112 provides a ligand contact to ATP. D144 is an active-site residue.

Belongs to the GHMP kinase family. IspE subfamily.

It catalyses the reaction 4-CDP-2-C-methyl-D-erythritol + ATP = 4-CDP-2-C-methyl-D-erythritol 2-phosphate + ADP + H(+). It functions in the pathway isoprenoid biosynthesis; isopentenyl diphosphate biosynthesis via DXP pathway; isopentenyl diphosphate from 1-deoxy-D-xylulose 5-phosphate: step 3/6. Functionally, catalyzes the phosphorylation of the position 2 hydroxy group of 4-diphosphocytidyl-2C-methyl-D-erythritol. The protein is 4-diphosphocytidyl-2-C-methyl-D-erythritol kinase of Burkholderia pseudomallei (strain 1710b).